The sequence spans 250 residues: AA9 family lytic polysaccharide monooxygenase F (250 aa).

A signal peptide spans 1–21 (MAMSKIATLAGLLASAGLVAG). His22 lines the Cu(2+) pocket. Asp51 is an O2 binding site. Intrachain disulfides connect Cys77/Cys200 and Cys121/Cys125. His107 provides a ligand contact to Cu(2+). Positions 186 and 195 each coordinate O2. Tyr197 serves as a coordination point for Cu(2+).

This sequence belongs to the glycosyl hydrolase 61 family. Cu(2+) is required as a cofactor.

It localises to the secreted. It catalyses the reaction Endohydrolysis of (1-&gt;4)-beta-D-glucosidic linkages in cellulose, lichenin and cereal beta-D-glucans.. Lytic polysaccharide monooxygenase (LMPO) that depolymerizes crystalline and amorphous polysaccharides via the oxidation of scissile alpha- or beta-(1-4)-glycosidic bonds, yielding C1 or C4 oxidation products. Catalysis by LPMOs requires the reduction of the active-site copper from Cu(II) to Cu(I) by a reducing agent and H(2)O(2) or O(2) as a cosubstrate. Major secreted component of the extracellular cellulolytic system. In Emericella nidulans (strain FGSC A4 / ATCC 38163 / CBS 112.46 / NRRL 194 / M139) (Aspergillus nidulans), this protein is AA9 family lytic polysaccharide monooxygenase F.